The primary structure comprises 231 residues: Uracil-DNA glycosylase (231 aa).

D74 acts as the Proton acceptor in catalysis.

Belongs to the uracil-DNA glycosylase (UDG) superfamily. UNG family.

Its subcellular location is the cytoplasm. It catalyses the reaction Hydrolyzes single-stranded DNA or mismatched double-stranded DNA and polynucleotides, releasing free uracil.. Excises uracil residues from the DNA which can arise as a result of misincorporation of dUMP residues by DNA polymerase or due to deamination of cytosine. The chain is Uracil-DNA glycosylase from Campylobacter jejuni subsp. jejuni serotype O:23/36 (strain 81-176).